A 179-amino-acid chain; its full sequence is NAD(P)H-quinone oxidoreductase subunit 6, chloroplastic (179 aa).

5 helical membrane passes run Ile-8 to Asn-28, Ile-30 to Leu-50, Val-58 to Leu-78, Ser-98 to Trp-118, and Val-150 to Ile-170.

The protein belongs to the complex I subunit 6 family. In terms of assembly, NDH is composed of at least 16 different subunits, 5 of which are encoded in the nucleus.

Its subcellular location is the plastid. The protein localises to the chloroplast thylakoid membrane. It carries out the reaction a plastoquinone + NADH + (n+1) H(+)(in) = a plastoquinol + NAD(+) + n H(+)(out). It catalyses the reaction a plastoquinone + NADPH + (n+1) H(+)(in) = a plastoquinol + NADP(+) + n H(+)(out). NDH shuttles electrons from NAD(P)H:plastoquinone, via FMN and iron-sulfur (Fe-S) centers, to quinones in the photosynthetic chain and possibly in a chloroplast respiratory chain. The immediate electron acceptor for the enzyme in this species is believed to be plastoquinone. Couples the redox reaction to proton translocation, and thus conserves the redox energy in a proton gradient. This Chaetosphaeridium globosum (Charophycean green alga) protein is NAD(P)H-quinone oxidoreductase subunit 6, chloroplastic (ndhG).